A 143-amino-acid chain; its full sequence is Putative pre-16S rRNA nuclease (143 aa).

This sequence belongs to the YqgF nuclease family.

The protein localises to the cytoplasm. Could be a nuclease involved in processing of the 5'-end of pre-16S rRNA. The sequence is that of Putative pre-16S rRNA nuclease from Lactobacillus gasseri (strain ATCC 33323 / DSM 20243 / BCRC 14619 / CIP 102991 / JCM 1131 / KCTC 3163 / NCIMB 11718 / NCTC 13722 / AM63).